A 40-amino-acid chain; its full sequence is MADTTGRIPLWLIGTVTGIIVIGLIGIFFYGSYSGLGSSL.

The chain crosses the membrane as a helical span at residues 8–28 (IPLWLIGTVTGIIVIGLIGIF).

Belongs to the PsbJ family. PSII is composed of 1 copy each of membrane proteins PsbA, PsbB, PsbC, PsbD, PsbE, PsbF, PsbH, PsbI, PsbJ, PsbK, PsbL, PsbM, PsbT, PsbX, PsbY, PsbZ, Psb30/Ycf12, at least 3 peripheral proteins of the oxygen-evolving complex and a large number of cofactors. It forms dimeric complexes.

It localises to the plastid. It is found in the chloroplast thylakoid membrane. Functionally, one of the components of the core complex of photosystem II (PSII). PSII is a light-driven water:plastoquinone oxidoreductase that uses light energy to abstract electrons from H(2)O, generating O(2) and a proton gradient subsequently used for ATP formation. It consists of a core antenna complex that captures photons, and an electron transfer chain that converts photonic excitation into a charge separation. In Piper cenocladum (Ant piper), this protein is Photosystem II reaction center protein J.